We begin with the raw amino-acid sequence, 473 residues long: FAD-dependent urate hydroxylase (473 aa).

It belongs to the HpyO family. In terms of assembly, homodimer. FAD serves as cofactor.

It carries out the reaction urate + NADH + O2 + H(+) = 5-hydroxyisourate + NAD(+) + H2O. The enzyme catalyses urate + NADPH + O2 + H(+) = 5-hydroxyisourate + NADP(+) + H2O. It participates in purine metabolism; urate degradation. Catalyzes the hydroxylation of urate to 5-hydroxyisourate (HIU). Is likely to be involved in the urate degradation pathway to allantoin. Is slightly more efficient (about 2.6 times) with NADPH than NADH as the electron donor. This Xanthomonas campestris pv. campestris (strain ATCC 33913 / DSM 3586 / NCPPB 528 / LMG 568 / P 25) protein is FAD-dependent urate hydroxylase.